The chain runs to 51 residues: Ribosomal protein eL39-like 2 (51 aa).

It belongs to the eukaryotic ribosomal protein eL39 family. In terms of assembly, component of a male germ cell-specific 60S large ribosomal subunit (LSU), which contains RPL10L and RPL39L, instead of RPL10 and RPL39 paralogs. The composition of the rest of the complex is similar to classical ribosomes. As to expression, testis specific.

The protein resides in the cytoplasm. Its function is as follows. Male germ cell-specific component of the ribosome, which is required for the formation of sperm and male fertility. Replaces the RPL39 paralog in the ribosome of male germ cells. The ribosome is a large ribonucleoprotein complex responsible for the synthesis of proteins in the cell. The male germ cell-specific ribosome displays a ribosomal polypeptide exit tunnel of distinct size and charge states compared with the classical ribosome. It is responsible for regulating the biosynthesis and folding of a subset of male germ-cell-specific proteins that are essential for the formation of sperm. This is Ribosomal protein eL39-like 2 from Homo sapiens (Human).